A 436-amino-acid polypeptide reads, in one-letter code: Trigger factor (436 aa).

Residues 161 to 246 form the PPIase FKBP-type domain; that stretch reads GDQLNIDFVG…VNSVSEAELP (86 aa).

It belongs to the FKBP-type PPIase family. Tig subfamily.

It localises to the cytoplasm. The catalysed reaction is [protein]-peptidylproline (omega=180) = [protein]-peptidylproline (omega=0). Functionally, involved in protein export. Acts as a chaperone by maintaining the newly synthesized protein in an open conformation. Functions as a peptidyl-prolyl cis-trans isomerase. This is Trigger factor from Azotobacter vinelandii (strain DJ / ATCC BAA-1303).